The sequence spans 521 residues: NAD(P)H-quinone oxidoreductase subunit 2 (521 aa).

The next 14 membrane-spanning stretches (helical) occupy residues 16-36 (ILPE…DLIG), 40-60 (VALA…GLLV), 80-100 (LSII…LMSV), 110-130 (LAEF…LSAA), 133-153 (LVMV…MTGY), 168-188 (LLIG…LYGL), 212-232 (LGLA…ISAV), 246-266 (PTPV…AVAI), 280-300 (WHVI…VVAL), 308-328 (MLAY…VAGS), 336-356 (VFYM…IILF), 380-400 (LGLS…GFFG), 402-422 (IYIF…LGLV), and 468-488 (VGIV…NPLF).

Belongs to the complex I subunit 2 family. As to quaternary structure, NDH-1 can be composed of about 15 different subunits; different subcomplexes with different compositions have been identified which probably have different functions.

The protein localises to the cellular thylakoid membrane. It catalyses the reaction a plastoquinone + NADH + (n+1) H(+)(in) = a plastoquinol + NAD(+) + n H(+)(out). It carries out the reaction a plastoquinone + NADPH + (n+1) H(+)(in) = a plastoquinol + NADP(+) + n H(+)(out). Its function is as follows. NDH-1 shuttles electrons from an unknown electron donor, via FMN and iron-sulfur (Fe-S) centers, to quinones in the respiratory and/or the photosynthetic chain. The immediate electron acceptor for the enzyme in this species is believed to be plastoquinone. Couples the redox reaction to proton translocation, and thus conserves the redox energy in a proton gradient. Cyanobacterial NDH-1 also plays a role in inorganic carbon-concentration. The sequence is that of NAD(P)H-quinone oxidoreductase subunit 2 from Synechocystis sp. (strain ATCC 27184 / PCC 6803 / Kazusa).